Reading from the N-terminus, the 138-residue chain is Actophorin (138 aa).

An ADF-H domain is found at 3–134 (GIQLADEVTS…NLDEVIAKVK (132 aa)).

This sequence belongs to the actin-binding proteins ADF family. Interacts with F-actin. Does not interact with G-actin. Interacts with 14-3-3 protein 3.

The protein localises to the cytoplasm. Its subcellular location is the cytoskeleton. It localises to the cell membrane. The protein resides in the cell projection. It is found in the phagocytic cup. The protein localises to the pseudopodium. In terms of biological role, actin-binding protein that severs actin filaments. The chain is Actophorin from Entamoeba histolytica (strain ATCC 30459 / HM-1:IMSS / ABRM).